The chain runs to 381 residues: Bifunctional polyhydroxybutyrate synthase / ABC transporter periplasmic binding protein (381 aa).

Residues 1–22 form the signal peptide; that stretch reads MSKTFARSSLCALSMTIMTAHA.

The protein belongs to the bacterial solute-binding protein PotD/PotF family.

Its subcellular location is the periplasm. It catalyses the reaction (3R)-3-hydroxybutanoyl-CoA + [(3R)-hydroxybutanoate](n) = [(3R)-hydroxybutanoate](n+1) + CoA. Catalyzes the formation of short polymers of R-3-hydroxybutyrate (cPHB). Involved in natural transformation. Probably part of the ABC transporter complex YdcSTUV. During natural transformation, may bind dsDNA and convey it to the inner membrane channel formed by YdcV. This Escherichia coli (strain K12) protein is Bifunctional polyhydroxybutyrate synthase / ABC transporter periplasmic binding protein (ydcS).